Consider the following 85-residue polypeptide: MKAKQEIKKIKEFDYDAWIESKELKDIFPPRIMLLWWIGILGMLNYNLVQIVPNSGVALLSVSTFIVGCGLCIGFMLGIEQKKNR.

2 consecutive transmembrane segments (helical) span residues 32 to 52 (IMLL…VQIV) and 59 to 79 (LLSV…MLGI).

The protein resides in the host membrane. This chain is Putative transmembrane protein ORF28, found in Haloarcula hispanica (His1V).